The sequence spans 238 residues: MRPSGRQPDQTRDIKITKNYTKHAEGSVLVEFGDTKVICTATVENGVPRFLRGEDQGWVTAEYGMLPRATGTRNQREAARGKQGGRTLEIQRLIGRSLRAAVDLKKMPDISITIDCDVIQADGGTRTASITGGFVAMADAINSLLAKGQLKNNPILHKVAAISVGVYEGVPVVDLDYDEDSKAETDMNVVMTDQDGFIEVQGTAEAAPFSSAELTAMLDLAGKGIRQLFVAQEEVLQS.

Phosphate is bound by residues arginine 86 and 124-126 (GTR).

The protein belongs to the RNase PH family. Homohexameric ring arranged as a trimer of dimers.

It carries out the reaction tRNA(n+1) + phosphate = tRNA(n) + a ribonucleoside 5'-diphosphate. In terms of biological role, phosphorolytic 3'-5' exoribonuclease that plays an important role in tRNA 3'-end maturation. Removes nucleotide residues following the 3'-CCA terminus of tRNAs; can also add nucleotides to the ends of RNA molecules by using nucleoside diphosphates as substrates, but this may not be physiologically important. Probably plays a role in initiation of 16S rRNA degradation (leading to ribosome degradation) during starvation. This is Ribonuclease PH from Hahella chejuensis (strain KCTC 2396).